Consider the following 104-residue polypeptide: Large ribosomal subunit protein bL21 (104 aa).

Belongs to the bacterial ribosomal protein bL21 family. As to quaternary structure, part of the 50S ribosomal subunit. Contacts protein L20.

Functionally, this protein binds to 23S rRNA in the presence of protein L20. The chain is Large ribosomal subunit protein bL21 from Agrobacterium fabrum (strain C58 / ATCC 33970) (Agrobacterium tumefaciens (strain C58)).